We begin with the raw amino-acid sequence, 740 residues long: Ribosomal protein S6 kinase alpha-6 (740 aa).

The Protein kinase 1 domain occupies phenylalanine 67 to phenylalanine 326. ATP-binding positions include leucine 73–valine 81 and lysine 99. The active-site Proton acceptor is the aspartate 192. An AGC-kinase C-terminal domain is found at serine 327 to lysine 396. Residues tyrosine 420 to isoleucine 677 form the Protein kinase 2 domain. ATP contacts are provided by residues isoleucine 426–cysteine 434 and lysine 449. Residue aspartate 537 is the Proton acceptor of the active site.

Belongs to the protein kinase superfamily. AGC Ser/Thr protein kinase family. S6 kinase subfamily. Forms a complex with either ERK1 or ERK2 in quiescent cells. Transiently dissociates following mitogenic stimulation. The cofactor is Mg(2+).

It carries out the reaction L-seryl-[protein] + ATP = O-phospho-L-seryl-[protein] + ADP + H(+). It catalyses the reaction L-threonyl-[protein] + ATP = O-phospho-L-threonyl-[protein] + ADP + H(+). Activated by multiple phosphorylations on threonine and serine residues. Functionally, serine/threonine kinase that may play a role in mediating the growth-factor and stress induced activation of the transcription factor CREB. The sequence is that of Ribosomal protein S6 kinase alpha-6 (rps6ka6) from Danio rerio (Zebrafish).